Consider the following 155-residue polypeptide: Ribosomal RNA large subunit methyltransferase H (155 aa).

Residues leucine 72, glycine 103, and 122–127 (LSPLTL) each bind S-adenosyl-L-methionine.

The protein belongs to the RNA methyltransferase RlmH family. In terms of assembly, homodimer.

It localises to the cytoplasm. It carries out the reaction pseudouridine(1915) in 23S rRNA + S-adenosyl-L-methionine = N(3)-methylpseudouridine(1915) in 23S rRNA + S-adenosyl-L-homocysteine + H(+). Functionally, specifically methylates the pseudouridine at position 1915 (m3Psi1915) in 23S rRNA. The sequence is that of Ribosomal RNA large subunit methyltransferase H from Histophilus somni (strain 2336) (Haemophilus somnus).